The sequence spans 181 residues: Proteinase inhibitor B (181 aa).

The N-terminal stretch at M1–G24 is a signal peptide. Disulfide bonds link C67–C113, C134–C143, and C136–C139.

Belongs to the protease inhibitor I3 (leguminous Kunitz-type inhibitor) family.

The protein resides in the secreted. Possesses two reactive sites. Inhibits two molecules of trypsin simultaneously. Inhibits efficiently kallikrein, but chymotrypsin weakly. The protein is Proteinase inhibitor B of Sagittaria sagittifolia (Arrowhead).